The following is a 439-amino-acid chain: uncharacterized protein (439 aa).

The segment covering Gln268–Val284 has biased composition (low complexity). Residues Gln268–His439 are disordered. Residues Gln285 to Pro328 are compositionally biased toward pro residues. Residues Gln350–His439 are compositionally biased toward low complexity.

This is an uncharacterized protein from Dictyostelium discoideum (Social amoeba).